A 308-amino-acid chain; its full sequence is MNKLIYGLAGPTASGKTSLSISIANKINAEIISVDSSLVYKGMNIGTAKPTLDEQGDIKHHLIDIIEPTESFSVADFITNVNKLKKEIWSRGKEVLLVGGTMLYFKGLIEGLSSLPESQLEIRQTLELERKAKGLQYLHQQLNKMDQESAQKINPNDQQRIFRALEVIMITGKKYSELVKTSKVGGLEEQLKLCALVPNDRSILHNNIELRFKQMLDQGFLDEVQSLRKNPKLTKETTAIRSVGYRQAWEYLDGDISYEEFVKKGIVATRQLAKRQLTWIRNWQDEINLVEVENQNKEQQILEYFDYK.

10–17 (GPTASGKT) provides a ligand contact to ATP. Position 12 to 17 (12 to 17 (TASGKT)) interacts with substrate. Interaction with substrate tRNA stretches follow at residues 35–38 (DSSL) and 159–163 (QRIFR).

The protein belongs to the IPP transferase family. Monomer. The cofactor is Mg(2+).

The catalysed reaction is adenosine(37) in tRNA + dimethylallyl diphosphate = N(6)-dimethylallyladenosine(37) in tRNA + diphosphate. In terms of biological role, catalyzes the transfer of a dimethylallyl group onto the adenine at position 37 in tRNAs that read codons beginning with uridine, leading to the formation of N6-(dimethylallyl)adenosine (i(6)A). This Francisella philomiragia subsp. philomiragia (strain ATCC 25017 / CCUG 19701 / FSC 153 / O#319-036) protein is tRNA dimethylallyltransferase.